The following is a 134-amino-acid chain: Large ribosomal subunit protein bL21 (134 aa).

This sequence belongs to the bacterial ribosomal protein bL21 family. As to quaternary structure, part of the 50S ribosomal subunit. Contacts protein L20.

Its function is as follows. This protein binds to 23S rRNA in the presence of protein L20. This is Large ribosomal subunit protein bL21 from Pelagibacter ubique (strain HTCC1062).